The primary structure comprises 1153 residues: Bifunctional dioxygenase (DOX)-epoxy alcohol synthase (EAS) (1153 aa).

Residues 46–56 (SSKESPSRKSS) show a composition bias toward low complexity. Positions 46–113 (SSKESPSRKS…TQHGDGTYPT (68 aa)) are disordered. Over residues 57-74 (TIGQSTRNGSCQADTQKG) the composition is skewed to polar residues. A compositionally biased stretch (basic and acidic residues) spans 81–98 (EKPKPVKENPMKKLKEMS). A fatty acid alpha-dioxygenase region spans residues 177–525 (TDSLINELWE…DGKFDDDDLV (349 aa)). His-276 contributes to the heme b binding site. Tyr-454 is an active-site residue. Heme b is bound at residue His-457. The epoxy alcohol synthase stretch occupies residues 732–1153 (RVNITSYGGA…VTMRVMWDDE (422 aa)). Cys-1086 provides a ligand contact to heme.

It in the N-terminal section; belongs to the peroxidase family. In the C-terminal section; belongs to the cytochrome P450 family. Homotetramer. Heme b is required as a cofactor. It depends on heme as a cofactor.

It carries out the reaction (9Z)-octadecenoate + O2 = (8R)-hydroperoxy-(9Z)-octadecenoate. The catalysed reaction is (9Z)-octadecenoate + O2 = 10-hydroperoxy-(8E)-octadecenoate. It catalyses the reaction (9Z,12Z)-octadecadienoate + O2 = (8E,10R,12Z)-10-hydroperoxyoctadeca-8,12-dienoate. The enzyme catalyses (9Z,12Z,15Z)-octadecatrienoate + O2 = (10R)-hydroperoxy-(8E,12Z,15Z)-octadecatrienoate. It carries out the reaction (9Z,12Z,15Z)-octadecatrienoate + O2 = (8R)-hydroperoxy-(9Z,12Z,15Z)-octadecatrienoate. The catalysed reaction is (11Z,14Z)-eicosadienoate + O2 = 12-hydroperoxy-(10E,14Z)-eicosadienoate. It catalyses the reaction (11Z,14Z,17Z)-eicosatrienoate + O2 = 12-hydroperoxy-(10E,14Z,17Z)-eicosatrienoate. The enzyme catalyses (12R,13S)-epoxy-(9Z)-octadecenoate + O2 = (12R,13S)-epoxy-(10R)-hydroperoxy-(8E)-octadecenoate. It carries out the reaction (8E,10R,12Z)-10-hydroperoxyoctadeca-8,12-dienoate = (12S,13R)-epoxy-(10R)-hydroxy-(8E)-octadecenoate. The catalysed reaction is (10R)-hydroperoxy-(8E,12Z,15Z)-octadecatrienoate = 12,13-epoxy-(10R)-hydroxy-(8E,15Z)-octadecadienoate. It catalyses the reaction 12-hydroperoxy-(10E,14Z)-eicosadienoate = 10,11-epoxy-12-hydroxy-(14Z)-eicosenoate. The enzyme catalyses 12-hydroperoxy-(10E,14Z,17Z)-eicosatrienoate = 14,15-epoxy-12-hydroxy-(10E,17Z)-eicosadienoate. It carries out the reaction (13R)-hydroperoxy-(9Z,11E)-octadecadienoate = (12R,13R)-epoxy-(11S)-hydroxy-(9Z)-octadecenoate. The catalysed reaction is (13S)-hydroperoxy-(9Z,11E)-octadecadienoate = (12R,13R)-epoxy-(11S)-hydroxy-(9Z)-octadecenoate. It catalyses the reaction 12-hydroperoxy-(10E,14Z)-eicosadienoate = 14,15-epoxy-12-hydroxy-(10E)-eicosenoate. The enzyme catalyses 12-hydroperoxy-(10E,14Z,17Z)-eicosatrienoate = 10,11-epoxy-12-hydroxy-(14Z,17Z)-eicosadienoate. In terms of biological role, bifunctional dioxygenase (DOX)-epoxy alcohol synthase (EAS) that converts linoleic acid (18:2n-6) sequentially to 10(R)-hydroperoxy-8(E),12(Z)-octadecadienoic acid (10R-HPODE) and 10R-HPODE further to 12 S(13R)-epoxy-10(R)-hydroxy-8(E)-octadecenoic acid as the end product. Oxygenation at C-10 occurs by retention of the pro-R hydrogen of C-8 of 18:2n-6, suggesting antarafacial hydrogen abstraction and oxygenation. The epoxy alcohol is formed from 10R-HPODE, likely by heterolytic cleavage of the dioxygen bond and subsequent intramolecular epoxidation of the 12(Z) double bond. The DOX domain is also able to oxygenate position C-8 of linoleic acid to produce 8(R)-hydroperoxy-8(E),12(Z)-octadecadienoic acid (8R-HPODE). Moreover, the DOX domain can oxygenate alpha-linolenic acid (18:3n-3) at C-8 or C-10 to produce respectively 8HOTrE and 10HOTrE, oleic acid (18:1n-9) at C-8 or C-10 to produce respectively 8-H(P)OME and 10-H(P)OME (with 8R stereoisomer to over 95%), eicosadienoic acid (20:2n-6) at C-10 or C-12 to produce respectively 10(11)-epoxy-12-hydroxy-14(Z)-eicosenoic acid and 14(15)-epoxy-12-hydroxy-10(E)-eicosenoic acid, as well as eicosatrienoic acid (20:3n-3) at C-10 or C-12 to produce respectively 10(11)-epoxy-12-hydroxy-14(Z),17(Z)-eicosadienoic acid and 14(15)-epoxy-12-hydroxy-14(Z),17(Z)-eicosadienoic acid. On the other side, the enzyme EAS domain can also catalyze the conversion of 10HOTrE into 12(13)-epoxy-10(R)-hydroxy-8(E),15(Z)-octadecadienoic acid, 13-R-HPODE into the stereoisomers of 12(13)-epoxy-11-hydroxy-9(Z)-octadecenoic acids (erythro/threo, 1:4), as well as 13S-HPODE into the stereoisomers of 12(13)-epoxy-11-hydroxy-9(Z)-octadecenoic acids (erythro/threo, 1:4) (EAS activity). Gamma-linolenic acid (18:3n-6) is not a substrate. In Pyricularia oryzae (strain 70-15 / ATCC MYA-4617 / FGSC 8958) (Rice blast fungus), this protein is Bifunctional dioxygenase (DOX)-epoxy alcohol synthase (EAS).